The primary structure comprises 124 residues: Small ribosomal subunit protein uS12 (124 aa).

A 3-methylthioaspartic acid modification is found at aspartate 89.

This sequence belongs to the universal ribosomal protein uS12 family. Part of the 30S ribosomal subunit. Contacts proteins S8 and S17. May interact with IF1 in the 30S initiation complex.

Functionally, with S4 and S5 plays an important role in translational accuracy. In terms of biological role, interacts with and stabilizes bases of the 16S rRNA that are involved in tRNA selection in the A site and with the mRNA backbone. Located at the interface of the 30S and 50S subunits, it traverses the body of the 30S subunit contacting proteins on the other side and probably holding the rRNA structure together. The combined cluster of proteins S8, S12 and S17 appears to hold together the shoulder and platform of the 30S subunit. This Shewanella amazonensis (strain ATCC BAA-1098 / SB2B) protein is Small ribosomal subunit protein uS12.